A 506-amino-acid polypeptide reads, in one-letter code: Histidine ammonia-lyase (506 aa).

Positions 143 to 145 form a cross-link, 5-imidazolinone (Ala-Gly); it reads ASG. At Ser-144 the chain carries 2,3-didehydroalanine (Ser).

Belongs to the PAL/histidase family. Post-translationally, contains an active site 4-methylidene-imidazol-5-one (MIO), which is formed autocatalytically by cyclization and dehydration of residues Ala-Ser-Gly.

It localises to the cytoplasm. The enzyme catalyses L-histidine = trans-urocanate + NH4(+). Its pathway is amino-acid degradation; L-histidine degradation into L-glutamate; N-formimidoyl-L-glutamate from L-histidine: step 1/3. This is Histidine ammonia-lyase from Salmonella paratyphi C (strain RKS4594).